The chain runs to 314 residues: Epithelial-stromal interaction protein 1 (314 aa).

Disordered stretches follow at residues 1–72 (MYTR…PNES), 227–272 (WAGS…RAQI), and 289–314 (QGKS…SWGL). A compositionally biased stretch (basic and acidic residues) spans 18–30 (SRDHAGAGQRREL). Ser39 carries the post-translational modification Phosphoserine. Residues 71 to 180 (ESRRQKIQRI…QEDIRRATFR (110 aa)) are a coiled coil. A compositionally biased stretch (basic and acidic residues) spans 232-272 (AHRDSPQKEDNPRLQKTRDGHQKNKLLETKGQHQEEERAQI). A compositionally biased stretch (polar residues) spans 305–314 (NMNSTDSWGL).

In terms of tissue distribution, expressed in the spleen, with expression in T cells, B cells, natural killer cells and natural killer T cells and high expression in monocytes and macrophages.

Its function is as follows. Plays a role in M1 macrophage polarization and is required for the proper regulation of gene expression during M1 versus M2 macrophage differentiation. Might play a role in RELA/p65 and STAT1 phosphorylation and nuclear localization upon activation of macrophages. This chain is Epithelial-stromal interaction protein 1 (Epsti1), found in Mus musculus (Mouse).